Here is a 553-residue protein sequence, read N- to C-terminus: MLSVRVAAAVVRALPRRAGLVSRNALGSSFIAARNFHASNTHLQKTGTAEMSSILEERILGADTSVDLEETGRVLSIGDGIARVHGLRNVQAEEMVEFSSGLKGMSLNLEPDNVGVVVFGNDKLIKEGDIVKRTGAIVDVPVGEELLGRVVDALGNAIDGKGPIGSKTRRRVGLKAPGIIPRISVREPMQTGIKAVDSLVPIGRGQRELIIGDRQTGKTSIAIDTIINQKRFNDGSDEKKKLYCIYVAIGQKRSTVAQLVKRLTDADAMKYTIVVSATASDAAPLQYLAPYSGCSMGEYFRDNGKHALIIYDDLSKQAVAYRQMSLLLRRPPGREAYPGDVFYLHSRLLERAAKMNDAFGGGSLTALPVIETQAGDVSAYIPTNVISITDGQIFLETELFYKGIRPAINVGLSVSRVGSAAQTRAMKQVAGTMKLELAQYREVAAFAQFGSDLDAATQQLLSRGVRLTELLKQGQYSPMAIEEQVAVIYAGVRGYLDKLEPSKITKFENAFLSHVVSQHQALLGTIRADGKISEQSDAKLKEIVTNFLAGFEA.

A mitochondrion-targeting transit peptide spans 1–43; it reads MLSVRVAAAVVRALPRRAGLVSRNALGSSFIAARNFHASNTHL. 2 positions are modified to phosphoserine: S53 and S65. S76 is modified (phosphoserine; alternate). O-linked (GlcNAc) serine; alternate glycosylation is present at S76. S106 is modified (phosphoserine). N6-acetyllysine is present on residues K123, K126, and K132. Position 134 is a phosphothreonine (T134). Residue K161 is modified to N6-acetyllysine; alternate. At K161 the chain carries N6-succinyllysine; alternate. A Phosphoserine modification is found at S166. K167 carries the post-translational modification N6-acetyllysine; alternate. K167 is modified (N6-succinyllysine; alternate). S184 carries the post-translational modification Phosphoserine. R204 carries the post-translational modification Omega-N-methylarginine. 5 residues coordinate ATP: Q215, G217, K218, T219, and S220. Mg(2+) is bound at residue T219. An N6-acetyllysine; alternate mark is found at K230 and K239. An N6-succinyllysine; alternate mark is found at K230 and K239. K240 carries the post-translational modification N6-acetyllysine. Residues K261 and K305 each carry the N6-acetyllysine; alternate modification. N6-succinyllysine; alternate occurs at positions 261 and 305. D312 is a Mg(2+) binding site. K427 carries the N6-acetyllysine; alternate modification. K427 is modified (N6-succinyllysine; alternate). The residue at position 434 (K434) is an N6-acetyllysine. ATP contacts are provided by Q473 and Q475. 4 positions are modified to N6-acetyllysine; alternate: K498, K506, K531, and K539. K498, K506, K531, and K539 each carry N6-succinyllysine; alternate. Residue K541 is modified to N6-acetyllysine.

The protein belongs to the ATPase alpha/beta chains family. As to quaternary structure, homotrimer. Component of the ATP synthase complex composed at least of ATP5F1A/subunit alpha, ATP5F1B/subunit beta, ATP5MC1/subunit c (homooctomer), MT-ATP6/subunit a, MT-ATP8/subunit 8, ATP5ME/subunit e, ATP5MF/subunit f, ATP5MG/subunit g, ATP5MK/subunit k, ATP5MJ/subunit j, ATP5F1C/subunit gamma, ATP5F1D/subunit delta, ATP5F1E/subunit epsilon, ATP5PF/subunit F6, ATP5PB/subunit b, ATP5PD/subunit d, ATP5PO/subunit OSCP. ATP synthase complex consists of a soluble F(1) head domain (subunits alpha(3) and beta(3)) - the catalytic core - and a membrane F(0) domain - the membrane proton channel (subunits c, a, 8, e, f, g, k and j). These two domains are linked by a central stalk (subunits gamma, delta, and epsilon) rotating inside the F1 region and a stationary peripheral stalk (subunits F6, b, d, and OSCP). Interacts with ATPAF2. Interacts with HRG; the interaction occurs on the surface of T-cells and alters the cell morphology when associated with concanavalin (in vitro). Interacts with PLG (angiostatin peptide); the interaction inhibits most of the angiogenic properties of angiostatin. Interacts with BLOC1S1. Interacts with BCL2L1 isoform BCL-X(L); the interaction mediates the association of BCL2L1 isoform BCL-X(L) with the mitochondrial membrane F(1)F(0) ATP synthase and enhances neurons metabolic efficiency. Interacts with CLN5 and PPT1. Interacts with S100A1; this interaction increases F1-ATPase activity. Interacts with ABCB7; this interaction allows the regulation of cellular iron homeostasis and cellular reactive oxygen species (ROS) levels in cardiomyocytes. Acetylated on lysine residues. BLOC1S1 is required for acetylation.

The protein localises to the mitochondrion inner membrane. It localises to the cell membrane. Subunit alpha, of the mitochondrial membrane ATP synthase complex (F(1)F(0) ATP synthase or Complex V) that produces ATP from ADP in the presence of a proton gradient across the membrane which is generated by electron transport complexes of the respiratory chain. ATP synthase complex consist of a soluble F(1) head domain - the catalytic core - and a membrane F(1) domain - the membrane proton channel. These two domains are linked by a central stalk rotating inside the F(1) region and a stationary peripheral stalk. During catalysis, ATP synthesis in the catalytic domain of F(1) is coupled via a rotary mechanism of the central stalk subunits to proton translocation. In vivo, can only synthesize ATP although its ATP hydrolase activity can be activated artificially in vitro. With the catalytic subunit beta (ATP5F1B), forms the catalytic core in the F(1) domain. Subunit alpha does not bear the catalytic high-affinity ATP-binding sites. This Pan troglodytes (Chimpanzee) protein is ATP synthase F(1) complex subunit alpha, mitochondrial.